A 527-amino-acid chain; its full sequence is Acid-sensing ion channel 1 (527 aa).

Over 1 to 49 (MMDLKVDEEEVDSGQPVSIQAFASSSTLHGISHIFSYERLSLKRVVWAL) the chain is Cytoplasmic. A helical membrane pass occupies residues 50-71 (CFMGSLALLALVCTNRIQYYFL). Topologically, residues 72–424 (YPHVTKLDEV…NYETIEQKKA (353 aa)) are extracellular. Cystine bridges form between Cys94-Cys195, Cys173-Cys180, Cys291-Cys366, Cys309-Cys362, Cys313-Cys360, Cys322-Cys344, and Cys324-Cys336. 2 N-linked (GlcNAc...) asparagine glycosylation sites follow: Asn367 and Asn394. A discontinuously helical transmembrane segment spans residues 425–454 (YEVAGLLGDIGGQMGLFIGASILTVLELFD). The GAS motif; ion selectivity filter signature appears at 443–445 (GAS). The Cytoplasmic portion of the chain corresponds to 455-527 (YAYEVIKHRL…ARGTFEDFTC (73 aa)).

This sequence belongs to the amiloride-sensitive sodium channel (TC 1.A.6) family. ASIC1 subfamily. As to quaternary structure, homotrimer. Heterotrimer; with other ASIC proteins producing channel with different properties.

The protein resides in the cell membrane. The protein localises to the postsynaptic cell membrane. It is found in the cell projection. Its subcellular location is the dendrite. The catalysed reaction is Na(+)(in) = Na(+)(out). It carries out the reaction Li(+)(in) = Li(+)(out). It catalyses the reaction K(+)(in) = K(+)(out). The enzyme catalyses Ca(2+)(in) = Ca(2+)(out). Inhibited by the diuretic drug amiloride. Inhibited by Cs(1+) ions. Inhibited by the spider venom psalmotoxin-1; this locks the channel into its desensitized conformation. Channel activity is increased by the heterodimeric snake venom neurotoxin composed of MitTx-alpha and MitTx-beta; this slows channel closure and increases the magnitude of the steady-state current that is triggered by low pH. In terms of biological role, forms voltage-independent, pH-gated trimeric sodium channels that act as postsynaptic excitatory receptors in the nervous system, playing a crucial role in regulating synaptic plasticity, learning, and memory. Upon extracellular pH drop this channel elicits transient, fast activating, and completely desensitizing inward currents. Displays high selectivity for sodium ions but can also permit the permeation of other cations. Regulates more or less directly intracellular calcium concentration and CaMKII phosphorylation, and thereby the density of dendritic spines. Modulates neuronal activity in the circuits underlying innate fear. This is Acid-sensing ion channel 1 from Gallus gallus (Chicken).